A 407-amino-acid polypeptide reads, in one-letter code: Polygalacturonase (407 aa).

The N-terminal stretch at 1-26 (MAPHLNIVPSMFVLLLLFISASKVQP) is a signal peptide. PbH1 repeat units follow at residues 180–206 (CKNI…HMGK) and 207–228 (SEGV…SIGD). Residue Asn182 is glycosylated (N-linked (GlcNAc...) asparagine). The active-site Proton donor is Asp221. An intrachain disulfide couples Cys223 to Cys240. Residue His244 is part of the active site. PbH1 repeat units lie at residues 260-281 (VEGI…RIKT) and 290-311 (VSEI…LIDQ). Asn267, Asn272, Asn302, and Asn331 each carry an N-linked (GlcNAc...) asparagine glycan. 2 disulfide bridges follow: Cys351–Cys357 and Cys379–Cys395. One copy of the PbH1 5 repeat lies at 357-384 (CQNVELADIDIQHNGAEPATSQCLNVKP).

It belongs to the glycosyl hydrolase 28 family. As to expression, pollen.

The protein localises to the secreted. It localises to the cell wall. It carries out the reaction (1,4-alpha-D-galacturonosyl)n+m + H2O = (1,4-alpha-D-galacturonosyl)n + (1,4-alpha-D-galacturonosyl)m.. May function in the depolymerization of the pectin in its walls during pollen tube elongation, or in that of the pistil during pollination. This chain is Polygalacturonase (G9), found in Gossypium barbadense (Sea Island cotton).